A 181-amino-acid chain; its full sequence is ATP-dependent protease subunit HslV (181 aa).

T6 is a catalytic residue. Na(+) is bound by residues G162, C165, and T168.

The protein belongs to the peptidase T1B family. HslV subfamily. A double ring-shaped homohexamer of HslV is capped on each side by a ring-shaped HslU homohexamer. The assembly of the HslU/HslV complex is dependent on binding of ATP.

The protein resides in the cytoplasm. It catalyses the reaction ATP-dependent cleavage of peptide bonds with broad specificity.. With respect to regulation, allosterically activated by HslU binding. Protease subunit of a proteasome-like degradation complex believed to be a general protein degrading machinery. This chain is ATP-dependent protease subunit HslV, found in Nitratidesulfovibrio vulgaris (strain ATCC 29579 / DSM 644 / CCUG 34227 / NCIMB 8303 / VKM B-1760 / Hildenborough) (Desulfovibrio vulgaris).